Consider the following 651-residue polypeptide: Probable potassium transport system protein Kup (651 aa).

The next 12 helical transmembrane spans lie at 41–61 (LVLG…IYAF), 82–102 (VVSL…VLFV), 130–150 (LILG…VITP), 163–183 (IVAP…LVTL), 194–214 (VAIV…ASGL), 235–255 (FLTV…LAMT), 276–296 (WLWI…AFIL), 309–329 (MIPS…TVIA), 366–386 (IYIP…VLGF), 395–415 (AYGI…YIVM), 426–446 (ALPI…ANII), and 450–470 (EGGW…WTWV).

The protein belongs to the HAK/KUP transporter (TC 2.A.72) family.

Its subcellular location is the cell inner membrane. It catalyses the reaction K(+)(in) + H(+)(in) = K(+)(out) + H(+)(out). Transport of potassium into the cell. Likely operates as a K(+):H(+) symporter. The protein is Probable potassium transport system protein Kup of Brucella melitensis biotype 1 (strain ATCC 23456 / CCUG 17765 / NCTC 10094 / 16M).